A 159-amino-acid polypeptide reads, in one-letter code: Defense protein l(2)34Fc (159 aa).

An N-terminal signal peptide occupies residues 1–17; it reads MFRLLVLAACLAISVHA. The Reelin domain occupies 18-159; it reads YSDGAPKAAC…GRVTKDIDVE (142 aa). The cysteines at positions 27 and 99 are disulfide-linked.

The protein belongs to the insect defense protein family.

The protein localises to the secreted. Functionally, may have antimicrobial activity. A late response immune regulated gene that is negatively regulated by spz during the immune response. The chain is Defense protein l(2)34Fc (l(2)34Fc) from Drosophila melanogaster (Fruit fly).